We begin with the raw amino-acid sequence, 166 residues long: MAHIEKQAGELQEKLIAVNRVSKTVKGGRIFSFTALTVVGDGNGRVGFGYGKAREVPAAIQKAMEKARRNMINVALNHGTLQHPVKGVHTGSRVFMQPASEGTGIIAGGAMRAVLEVAGVHNVLAKAYGSTNPINVVRATIDGLENMNSPEMVAAKRGKSVEEILG.

The region spanning 11–74 is the S5 DRBM domain; sequence LQEKLIAVNR…EKARRNMINV (64 aa).

This sequence belongs to the universal ribosomal protein uS5 family. As to quaternary structure, part of the 30S ribosomal subunit. Contacts proteins S4 and S8.

Its function is as follows. With S4 and S12 plays an important role in translational accuracy. In terms of biological role, located at the back of the 30S subunit body where it stabilizes the conformation of the head with respect to the body. This Enterobacter sp. (strain 638) protein is Small ribosomal subunit protein uS5.